The chain runs to 480 residues: Aspartyl/glutamyl-tRNA(Asn/Gln) amidotransferase subunit B (480 aa).

Belongs to the GatB/GatE family. GatB subfamily. Heterotrimer of A, B and C subunits.

It catalyses the reaction L-glutamyl-tRNA(Gln) + L-glutamine + ATP + H2O = L-glutaminyl-tRNA(Gln) + L-glutamate + ADP + phosphate + H(+). The enzyme catalyses L-aspartyl-tRNA(Asn) + L-glutamine + ATP + H2O = L-asparaginyl-tRNA(Asn) + L-glutamate + ADP + phosphate + 2 H(+). Its function is as follows. Allows the formation of correctly charged Asn-tRNA(Asn) or Gln-tRNA(Gln) through the transamidation of misacylated Asp-tRNA(Asn) or Glu-tRNA(Gln) in organisms which lack either or both of asparaginyl-tRNA or glutaminyl-tRNA synthetases. The reaction takes place in the presence of glutamine and ATP through an activated phospho-Asp-tRNA(Asn) or phospho-Glu-tRNA(Gln). This is Aspartyl/glutamyl-tRNA(Asn/Gln) amidotransferase subunit B from Caldicellulosiruptor bescii (strain ATCC BAA-1888 / DSM 6725 / KCTC 15123 / Z-1320) (Anaerocellum thermophilum).